The sequence spans 441 residues: NADH-quinone oxidoreductase subunit D 1 (441 aa).

This sequence belongs to the complex I 49 kDa subunit family. In terms of assembly, NDH-1 is composed of 14 different subunits. Subunits NuoB, C, D, E, F, and G constitute the peripheral sector of the complex.

It is found in the cell membrane. The catalysed reaction is a quinone + NADH + 5 H(+)(in) = a quinol + NAD(+) + 4 H(+)(out). In terms of biological role, NDH-1 shuttles electrons from NADH, via FMN and iron-sulfur (Fe-S) centers, to quinones in the respiratory chain. The immediate electron acceptor for the enzyme in this species is believed to be a menaquinone. Couples the redox reaction to proton translocation (for every two electrons transferred, four hydrogen ions are translocated across the cytoplasmic membrane), and thus conserves the redox energy in a proton gradient. This Salinispora arenicola (strain CNS-205) protein is NADH-quinone oxidoreductase subunit D 1.